Consider the following 129-residue polypeptide: IEENRQRRKREEMVRTLQTRPEPNTAEWELIRMVTEAHRHTNAQGSSWKQKRKFLSDDIGQGPVVPTSEGDKVDLEAFSEFTKIMTPAITRVVDFAKKLPMFSELPCEDQIILLKGCCMEIMSLRAAVR.

Residues 26–129 (AEWELIRMVT…EIMSLRAAVR (104 aa)) form the NR LBD domain. Residue Arg-91 participates in 3,3',5-triiodo-L-thyronine binding.

It belongs to the nuclear hormone receptor family. NR1 subfamily.

The protein localises to the nucleus. In terms of biological role, nuclear hormone receptor that can act as a repressor or activator of transcription. High affinity receptor for thyroid hormones, including triiodothyronine and thyroxine. The polypeptide is Thyroid hormone receptor alpha (thra1) (Sparus aurata (Gilthead sea bream)).